Consider the following 149-residue polypeptide: SPbeta prophage-derived putative transcriptional regulator YosT (149 aa).

The sequence is that of SPbeta prophage-derived putative transcriptional regulator YosT (yosT) from Bacillus subtilis (strain 168).